The chain runs to 1141 residues: DNA-directed RNA polymerase subunit beta (1141 aa).

Composition is skewed to acidic residues over residues 1063 to 1074 (EIEIKEDDDDVS) and 1096 to 1141 (GGNE…GDEE). The interval 1063–1141 (EIEIKEDDDD…VPDEAYGDEE (79 aa)) is disordered.

Belongs to the RNA polymerase beta chain family. The RNAP catalytic core consists of 2 alpha, 1 beta, 1 beta' and 1 omega subunit. When a sigma factor is associated with the core the holoenzyme is formed, which can initiate transcription.

It carries out the reaction RNA(n) + a ribonucleoside 5'-triphosphate = RNA(n+1) + diphosphate. DNA-dependent RNA polymerase catalyzes the transcription of DNA into RNA using the four ribonucleoside triphosphates as substrates. The protein is DNA-directed RNA polymerase subunit beta of Moorella thermoacetica (strain ATCC 39073 / JCM 9320).